Consider the following 159-residue polypeptide: Ribosomal RNA large subunit methyltransferase H (159 aa).

Residues Leu76, Gly108, and 127–132 each bind S-adenosyl-L-methionine; that span reads FGRMTL.

The protein belongs to the RNA methyltransferase RlmH family. As to quaternary structure, homodimer.

The protein resides in the cytoplasm. It catalyses the reaction pseudouridine(1915) in 23S rRNA + S-adenosyl-L-methionine = N(3)-methylpseudouridine(1915) in 23S rRNA + S-adenosyl-L-homocysteine + H(+). Its function is as follows. Specifically methylates the pseudouridine at position 1915 (m3Psi1915) in 23S rRNA. The polypeptide is Ribosomal RNA large subunit methyltransferase H (Lactococcus lactis subsp. cremoris (strain SK11)).